A 174-amino-acid chain; its full sequence is UPF0398 protein llmg_0513 (174 aa).

This sequence belongs to the UPF0398 family.

The chain is UPF0398 protein llmg_0513 from Lactococcus lactis subsp. cremoris (strain MG1363).